A 97-amino-acid polypeptide reads, in one-letter code: Putative septation protein SpoVG (97 aa).

The protein belongs to the SpoVG family.

Functionally, could be involved in septation. In Borrelia garinii subsp. bavariensis (strain ATCC BAA-2496 / DSM 23469 / PBi) (Borreliella bavariensis), this protein is Putative septation protein SpoVG.